We begin with the raw amino-acid sequence, 288 residues long: Phosphatidylserine decarboxylase proenzyme (288 aa).

Active-site charge relay system; for autoendoproteolytic cleavage activity residues include Asp88, His145, and Ser248. Ser248 serves as the catalytic Schiff-base intermediate with substrate; via pyruvic acid; for decarboxylase activity. The residue at position 248 (Ser248) is a Pyruvic acid (Ser); by autocatalysis.

Belongs to the phosphatidylserine decarboxylase family. PSD-B subfamily. Prokaryotic type I sub-subfamily. As to quaternary structure, heterodimer of a large membrane-associated beta subunit and a small pyruvoyl-containing alpha subunit. Pyruvate serves as cofactor. Post-translationally, is synthesized initially as an inactive proenzyme. Formation of the active enzyme involves a self-maturation process in which the active site pyruvoyl group is generated from an internal serine residue via an autocatalytic post-translational modification. Two non-identical subunits are generated from the proenzyme in this reaction, and the pyruvate is formed at the N-terminus of the alpha chain, which is derived from the carboxyl end of the proenzyme. The autoendoproteolytic cleavage occurs by a canonical serine protease mechanism, in which the side chain hydroxyl group of the serine supplies its oxygen atom to form the C-terminus of the beta chain, while the remainder of the serine residue undergoes an oxidative deamination to produce ammonia and the pyruvoyl prosthetic group on the alpha chain. During this reaction, the Ser that is part of the protease active site of the proenzyme becomes the pyruvoyl prosthetic group, which constitutes an essential element of the active site of the mature decarboxylase.

It localises to the cell membrane. The enzyme catalyses a 1,2-diacyl-sn-glycero-3-phospho-L-serine + H(+) = a 1,2-diacyl-sn-glycero-3-phosphoethanolamine + CO2. Its pathway is phospholipid metabolism; phosphatidylethanolamine biosynthesis; phosphatidylethanolamine from CDP-diacylglycerol: step 2/2. In terms of biological role, catalyzes the formation of phosphatidylethanolamine (PtdEtn) from phosphatidylserine (PtdSer). In Azoarcus sp. (strain BH72), this protein is Phosphatidylserine decarboxylase proenzyme.